We begin with the raw amino-acid sequence, 345 residues long: Eukaryotic translation initiation factor 3 subunit F (345 aa).

An MPN domain is found at V30–G166. A disordered region spans residues G308–A345. Residues Q318–G331 are compositionally biased toward gly residues. The span at T335 to A345 shows a compositional bias: basic and acidic residues.

Belongs to the eIF-3 subunit F family. As to quaternary structure, component of the eukaryotic translation initiation factor 3 (eIF-3) complex.

The protein localises to the cytoplasm. Component of the eukaryotic translation initiation factor 3 (eIF-3) complex, which is involved in protein synthesis of a specialized repertoire of mRNAs and, together with other initiation factors, stimulates binding of mRNA and methionyl-tRNAi to the 40S ribosome. The eIF-3 complex specifically targets and initiates translation of a subset of mRNAs involved in cell proliferation. This is Eukaryotic translation initiation factor 3 subunit F from Aspergillus oryzae (strain ATCC 42149 / RIB 40) (Yellow koji mold).